The following is a 657-amino-acid chain: MNPLLELLDVHRTYQIGETTVNALRGVSLTIDRGEFVAIMGASGSGKSSLLQILGLLDNPDKGEFKILGNNVNTLSEDEQAGVRNNVAGFVFQQFHLLKRMTIVDNVRLPHIYSGLKGDFRQEAIARLKLVGLEERIDHTPNQLSGGEQQRVAIARALVRDPLIIFADEPTGNLDSKNSAEIMKIFTALHEEGKTIIMVTHENDIAAYACRVIIMKDGLIVSDERKAEMQPSRAVTGESAFDISGSGKGSIWQDGRFTGFMAQAFQSILANKMRTFLSVLGIFVGVASVIAMMALGEGAKSAMQEQLKSMGSNMLSIRGGSAKIRGAAQGAGAVARFSFNDVNDIASLGKLVKNASGVVNGSARIVYGNKNWSSTLTGVGFDYGTMRASIPAIGRWFTREEIQIREKSAIIGVTVVKEIFGSSNPIGKTIKINRINFKVIGIAPAKGFSGPQDEDDVVIIPVTTAMYRVLGKDYLSSIFVEVASPGLMGQAKTAITELIRKKHRLEEGDDSFNIRDMTEIQKMLSSTTQTMSLLLGSIAAISLLVGGIGIMNIMLVSVTERTREIGLRKAIGARKNDIMLQFLIESVGMTISGGLIGVFAGVGISLILAFFAGWAVKTSLLSVVLATTFSALIGVFFGLWPARKAAALKPVEALRYE.

The 238-residue stretch at 5-242 (LELLDVHRTY…RAVTGESAFD (238 aa)) folds into the ABC transporter domain. Position 41-48 (41-48 (GASGSGKS)) interacts with ATP. The next 4 helical transmembrane spans lie at 276–296 (FLSV…MALG), 538–558 (IAAI…LVSV), 596–616 (IGVF…GWAV), and 620–640 (LLSV…FGLW).

This sequence belongs to the ABC transporter superfamily. Macrolide exporter (TC 3.A.1.122) family. As to quaternary structure, homodimer.

Its subcellular location is the cell inner membrane. Functionally, non-canonical ABC transporter that contains transmembrane domains (TMD), which form a pore in the inner membrane, and an ATP-binding domain (NBD), which is responsible for energy generation. Confers resistance against macrolides. The chain is Macrolide export ATP-binding/permease protein MacB from Chlorobium phaeobacteroides (strain DSM 266 / SMG 266 / 2430).